Here is a 449-residue protein sequence, read N- to C-terminus: 23S rRNA (uracil(1939)-C(5))-methyltransferase RlmD (449 aa).

The TRAM domain occupies 1-66 (MGRSRHHNKL…AKFDEAKVVE (66 aa)). Residues Cys-79, Cys-85, Cys-88, and Cys-169 each contribute to the [4Fe-4S] cluster site. Gln-280, Phe-309, Asn-314, Glu-330, Asn-357, and Asp-379 together coordinate S-adenosyl-L-methionine. Cys-405 functions as the Nucleophile in the catalytic mechanism.

The protein belongs to the class I-like SAM-binding methyltransferase superfamily. RNA M5U methyltransferase family. RlmD subfamily.

The catalysed reaction is uridine(1939) in 23S rRNA + S-adenosyl-L-methionine = 5-methyluridine(1939) in 23S rRNA + S-adenosyl-L-homocysteine + H(+). Catalyzes the formation of 5-methyl-uridine at position 1939 (m5U1939) in 23S rRNA. This Francisella tularensis subsp. novicida (strain U112) protein is 23S rRNA (uracil(1939)-C(5))-methyltransferase RlmD.